The primary structure comprises 170 residues: MENIVLIGMPLSGKSTLGRELSKILKYDLIDTDTLIEEMEDKSIKEIFKIYGEDYFREKELEIINKLKKESNKVISTGGGLPIYNKNIYELKNIGFTVYLKVPLEELIKRMVKKEYDTRPLLKNNDTKFLEEMYKNRIEIYEKAHTIICNTNYEESLIKIVRAYKKWKGI.

11-16 (LSGKST) provides a ligand contact to ATP. Serine 15 serves as a coordination point for Mg(2+). Substrate is bound by residues aspartate 33, arginine 57, and glycine 79. Arginine 119 is a binding site for ATP. Residue arginine 137 participates in substrate binding.

It belongs to the shikimate kinase family. Monomer. Requires Mg(2+) as cofactor.

It localises to the cytoplasm. It catalyses the reaction shikimate + ATP = 3-phosphoshikimate + ADP + H(+). The protein operates within metabolic intermediate biosynthesis; chorismate biosynthesis; chorismate from D-erythrose 4-phosphate and phosphoenolpyruvate: step 5/7. In terms of biological role, catalyzes the specific phosphorylation of the 3-hydroxyl group of shikimic acid using ATP as a cosubstrate. The polypeptide is Shikimate kinase (Clostridium botulinum (strain Okra / Type B1)).